We begin with the raw amino-acid sequence, 532 residues long: Fatty-acid amide hydrolase 2 (532 aa).

The helical transmembrane segment at 11–31 (LFLLRALGFLIGLVGRAALVL) threads the bilayer. Active-site charge relay system residues include lysine 131 and serine 206. The active-site Acyl-ester intermediate is the serine 230.

It belongs to the amidase family. As to quaternary structure, homodimer. In terms of tissue distribution, expressed in kidney, liver, lung, prostate, heart and ovary.

The protein resides in the membrane. Its subcellular location is the lipid droplet. It catalyses the reaction N-(5Z,8Z,11Z,14Z-eicosatetraenoyl)-ethanolamine + H2O = ethanolamine + (5Z,8Z,11Z,14Z)-eicosatetraenoate. The catalysed reaction is (9Z)-octadecenamide + H2O = (9Z)-octadecenoate + NH4(+). The enzyme catalyses N-(9Z-octadecenoyl) ethanolamine + H2O = ethanolamine + (9Z)-octadecenoate. It carries out the reaction N-hexadecanoylethanolamine + H2O = ethanolamine + hexadecanoate. Inhibited by O-aryl carbamates and alpha-keto heterocytes. Catalyzes the hydrolysis of endogenous amidated lipids like the sleep-inducing lipid oleamide ((9Z)-octadecenamide), the endocannabinoid anandamide (N-(5Z,8Z,11Z,14Z-eicosatetraenoyl)-ethanolamine), as well as other fatty amides, to their corresponding fatty acids, thereby regulating the signaling functions of these molecules. Hydrolyzes monounsaturated substrate anandamide preferentially as compared to polyunsaturated substrates. This is Fatty-acid amide hydrolase 2 (FAAH2) from Homo sapiens (Human).